The following is a 474-amino-acid chain: tRNA-2-methylthio-N(6)-dimethylallyladenosine synthase (474 aa).

The MTTase N-terminal domain occupies 3–120 (KKLHIKTWGC…LPEMIEQVRR (118 aa)). [4Fe-4S] cluster contacts are provided by cysteine 12, cysteine 49, cysteine 83, cysteine 157, cysteine 161, and cysteine 164. The Radical SAM core domain maps to 143-375 (RAEGPTAFVS…QDRITQQAMR (233 aa)). Residues 378–441 (RHMMGTVQRI…TNSLRGVFIR (64 aa)) enclose the TRAM domain.

Belongs to the methylthiotransferase family. MiaB subfamily. Monomer. It depends on [4Fe-4S] cluster as a cofactor.

The protein resides in the cytoplasm. It carries out the reaction N(6)-dimethylallyladenosine(37) in tRNA + (sulfur carrier)-SH + AH2 + 2 S-adenosyl-L-methionine = 2-methylsulfanyl-N(6)-dimethylallyladenosine(37) in tRNA + (sulfur carrier)-H + 5'-deoxyadenosine + L-methionine + A + S-adenosyl-L-homocysteine + 2 H(+). Its function is as follows. Catalyzes the methylthiolation of N6-(dimethylallyl)adenosine (i(6)A), leading to the formation of 2-methylthio-N6-(dimethylallyl)adenosine (ms(2)i(6)A) at position 37 in tRNAs that read codons beginning with uridine. This is tRNA-2-methylthio-N(6)-dimethylallyladenosine synthase from Shewanella baltica (strain OS155 / ATCC BAA-1091).